The primary structure comprises 397 residues: Dual-specificity RNA methyltransferase RlmN (397 aa).

Catalysis depends on Glu120, which acts as the Proton acceptor. The Radical SAM core domain maps to 126 to 369; it reads ETDRGTLCVS…VRTPRGRDIL (244 aa). A disulfide bond links Cys133 and Cys372. [4Fe-4S] cluster is bound by residues Cys140, Cys144, and Cys147. S-adenosyl-L-methionine is bound by residues 198–199, Ser230, 252–254, and Asn329; these read GE and SLH. The S-methylcysteine intermediate role is filled by Cys372.

It belongs to the radical SAM superfamily. RlmN family. [4Fe-4S] cluster serves as cofactor.

The protein resides in the cytoplasm. The catalysed reaction is adenosine(2503) in 23S rRNA + 2 reduced [2Fe-2S]-[ferredoxin] + 2 S-adenosyl-L-methionine = 2-methyladenosine(2503) in 23S rRNA + 5'-deoxyadenosine + L-methionine + 2 oxidized [2Fe-2S]-[ferredoxin] + S-adenosyl-L-homocysteine. It catalyses the reaction adenosine(37) in tRNA + 2 reduced [2Fe-2S]-[ferredoxin] + 2 S-adenosyl-L-methionine = 2-methyladenosine(37) in tRNA + 5'-deoxyadenosine + L-methionine + 2 oxidized [2Fe-2S]-[ferredoxin] + S-adenosyl-L-homocysteine. Specifically methylates position 2 of adenine 2503 in 23S rRNA and position 2 of adenine 37 in tRNAs. m2A2503 modification seems to play a crucial role in the proofreading step occurring at the peptidyl transferase center and thus would serve to optimize ribosomal fidelity. This Nitrobacter winogradskyi (strain ATCC 25391 / DSM 10237 / CIP 104748 / NCIMB 11846 / Nb-255) protein is Dual-specificity RNA methyltransferase RlmN.